We begin with the raw amino-acid sequence, 436 residues long: UPF0597 protein DP0591 (436 aa).

The protein belongs to the UPF0597 family.

This Desulfotalea psychrophila (strain LSv54 / DSM 12343) protein is UPF0597 protein DP0591.